An 88-amino-acid polypeptide reads, in one-letter code: HssA/B-like protein 61 (88 aa).

It belongs to the hssA/B family.

The polypeptide is HssA/B-like protein 61 (hssl61) (Dictyostelium discoideum (Social amoeba)).